The following is a 503-amino-acid chain: Intracellular exo-alpha-(1-&gt;5)-L-arabinofuranosidase (503 aa).

Alpha-L-arabinofuranose-binding residues include E27, N72, and N172. E173 serves as the catalytic Proton donor/acceptor. Positions 244, 292, and 352 each coordinate alpha-L-arabinofuranose. Catalysis depends on E292, which acts as the Nucleophile.

It belongs to the glycosyl hydrolase 51 family. As to quaternary structure, homohexamer; trimer of dimers.

It is found in the cytoplasm. It carries out the reaction Hydrolysis of terminal non-reducing alpha-L-arabinofuranoside residues in alpha-L-arabinosides.. It functions in the pathway glycan metabolism; L-arabinan degradation. Functionally, involved in the degradation of arabinan and is a key enzyme in the complete degradation of the plant cell wall. Catalyzes the cleavage of terminal alpha-(1-&gt;5)-arabinofuranosyl bonds in small oligosaccharides as alpha-(1-&gt;5)-linked arabinobiose/arabinotriose, but does not display significant activity against linear non-substituted arabinan. It is also highly efficient in the cleavage of alpha-(1-&gt;3)-linked arabinoside of xylobiose and of the alpha-(1-&gt;3)-linked arabinoside decorations of polymeric wheat arabinoxylan. It exhibits very low activity against sugar beet arabinan. The protein is Intracellular exo-alpha-(1-&gt;5)-L-arabinofuranosidase of Acetivibrio thermocellus (strain ATCC 27405 / DSM 1237 / JCM 9322 / NBRC 103400 / NCIMB 10682 / NRRL B-4536 / VPI 7372) (Clostridium thermocellum).